The chain runs to 495 residues: Cobyric acid synthase (495 aa).

Residues 252–440 (RPKVVVLAYP…VHGLFADDGL (189 aa)) enclose the GATase cobBQ-type domain. Cysteine 334 (nucleophile) is an active-site residue. Residue histidine 432 is part of the active site.

Belongs to the CobB/CobQ family. CobQ subfamily.

It participates in cofactor biosynthesis; adenosylcobalamin biosynthesis. Its function is as follows. Catalyzes amidations at positions B, D, E, and G on adenosylcobyrinic A,C-diamide. NH(2) groups are provided by glutamine, and one molecule of ATP is hydrogenolyzed for each amidation. The polypeptide is Cobyric acid synthase (Bradyrhizobium sp. (strain ORS 278)).